Here is a 123-residue protein sequence, read N- to C-terminus: Small ribosomal subunit protein uS12 (123 aa).

3-methylthioaspartic acid is present on D89.

This sequence belongs to the universal ribosomal protein uS12 family. In terms of assembly, part of the 30S ribosomal subunit. Contacts proteins S8 and S17. May interact with IF1 in the 30S initiation complex.

Functionally, with S4 and S5 plays an important role in translational accuracy. Its function is as follows. Interacts with and stabilizes bases of the 16S rRNA that are involved in tRNA selection in the A site and with the mRNA backbone. Located at the interface of the 30S and 50S subunits, it traverses the body of the 30S subunit contacting proteins on the other side and probably holding the rRNA structure together. The combined cluster of proteins S8, S12 and S17 appears to hold together the shoulder and platform of the 30S subunit. The protein is Small ribosomal subunit protein uS12 of Geobacter metallireducens (strain ATCC 53774 / DSM 7210 / GS-15).